The sequence spans 245 residues: MYPVDLHMHTVASTHAYSTLHDYIVEARQKGIKLFAITDHGPDMADAPHYWHFMNMHVWPRLVDGVGILRGIEANIKNRQGDIDCTGPMLDKIDVIIAGFHEPVFAPQDKAANTEAMIAAMAQGDVHIISHPGNPRYPIDIAAVAAAAARYEVALELNNSSFTHSRKGSEDNCRAIAAAVRDAGGWLALGSDSHIAFSLGGFEHCERIIAEVEFPQERILNVSPRRLLDFLERRGKPAIAELADL.

Positions 7, 9, 15, 40, 73, 101, 131, 192, and 194 each coordinate Zn(2+).

The protein belongs to the PHP family. Homotrimer. The cofactor is Zn(2+).

The sequence is that of Probable phosphatase Spro_1934 from Serratia proteamaculans (strain 568).